The primary structure comprises 263 residues: Putative hydro-lyase GK2103 (263 aa).

The protein belongs to the D-glutamate cyclase family.

This Geobacillus kaustophilus (strain HTA426) protein is Putative hydro-lyase GK2103.